The chain runs to 663 residues: MFGVRYDPEESLLTPTLYHNGRFLPNLKKRKRRVQDHDVVDDDVVVFDNDKDEEEMNKEKKEEEEEEEEEEEETDNSEGESEKSESGSESESESESESESDVDGKHMKEELEDKDDAMEVDTIIEDNEYSGKHKSIFDKFKLSVTRTVNDDVVHSSRDEEEDFQKQSGSREKEKEEVVETQDLAPLPQPQLPRDRKLNSSTQHSANLDWLTTPEYIAIADTKPFSEFPLSPFMHENLESLGFENAFAVQVGVLSKLLPEIQANKLRPDAFGDVLVNASTGSGKTLAYSIPIIESLKDRVVPRVRAIVLVPTKPLINQVRATMLQLALGTNLNIVSLKNDISIREESERLIELVPDVVISTPGRLVEHLAMDSISLSSLRYLVVDEADRLLNQSFQNWSQILISKIHLQQVYDVANVWSLKVQKFIFSATLTTDAGKLASLDFHNPRLLIVNDSQRLVNELFSVPAMLSEYKLNFGVAKSSLKPLILAKFLIAQEKLSDVLVFTKSNESSIRLCTLLQAIFDRICLQEKVKVGFMNLTNNRTSLRSKILKDFTSQKINILVATDLIARGLDVTSIKDVVNYDLLNSSREYVHRVGRTARANQAGNAYNLVFGKGEEKWFKTISSEVSRNNDVKDVEVNLKQLISDEDEKLYQEALQSLQDQVRK.

Disordered stretches follow at residues 1–119 (MFGV…DAME) and 153–200 (VHSS…LNSS). Composition is skewed to acidic residues over residues 39-79 (VVDD…NSEG) and 88-101 (SESE…SESD). Basic and acidic residues-rich tracts occupy residues 102 to 111 (VDGKHMKEEL) and 168 to 177 (GSREKEKEEV). The Q motif motif lies at 222-250 (KPFSEFPLSPFMHENLESLGFENAFAVQV). The Helicase ATP-binding domain maps to 264-448 (KLRPDAFGDV…SLDFHNPRLL (185 aa)). 277 to 284 (ASTGSGKT) provides a ligand contact to ATP. The DEAD box motif lies at 384–387 (DEAD). One can recognise a Helicase C-terminal domain in the interval 485–642 (ILAKFLIAQE…DVEVNLKQLI (158 aa)).

The protein belongs to the DEAD box helicase family. DDX51/DBP6 subfamily. In terms of assembly, associated with pre-ribosomal particles.

Its subcellular location is the nucleus. It localises to the nucleolus. The enzyme catalyses ATP + H2O = ADP + phosphate + H(+). Functionally, ATP-binding RNA helicase involved in the biogenesis of 60S ribosomal subunits and is required for the normal formation of 25S and 5.8S rRNAs. The sequence is that of ATP-dependent RNA helicase DBP6 (DBP6) from Lodderomyces elongisporus (strain ATCC 11503 / CBS 2605 / JCM 1781 / NBRC 1676 / NRRL YB-4239) (Yeast).